Consider the following 428-residue polypeptide: D-amino acid dehydrogenase (428 aa).

3 to 17 serves as a coordination point for FAD; the sequence is VVVLGSGVVGVTSAY.

Belongs to the DadA oxidoreductase family. It depends on FAD as a cofactor.

It catalyses the reaction a D-alpha-amino acid + A + H2O = a 2-oxocarboxylate + AH2 + NH4(+). It functions in the pathway amino-acid degradation; D-alanine degradation; NH(3) and pyruvate from D-alanine: step 1/1. Its function is as follows. Oxidative deamination of D-amino acids. In Paraburkholderia phytofirmans (strain DSM 17436 / LMG 22146 / PsJN) (Burkholderia phytofirmans), this protein is D-amino acid dehydrogenase.